The sequence spans 297 residues: Phosphatidylinositol N-acetylglucosaminyltransferase subunit C (297 aa).

4 helical membrane passes run 67–87, 88–108, 153–173, and 239–259; these read VFVVIWWYMDEGLLAPQWLFG, TGLASSLVGYVLFDLIDGGDG, SVFMLLGHLIFFDYGANAAIV, and AFGGLLSISGVGAILFALLLF.

The protein belongs to the PIGC family. In terms of assembly, component of the glycosylphosphatidylinositol-N-acetylglucosaminyltransferase (GPI-GnT) complex composed at least by PIGA, PIGC, PIGH, PIGP, PIGQ, PIGY and DPM2. Interacts with PIGQ. Interacts with the heterodimer PIGA:PIGH.

It localises to the endoplasmic reticulum membrane. It functions in the pathway glycolipid biosynthesis; glycosylphosphatidylinositol-anchor biosynthesis. Functionally, part of the glycosylphosphatidylinositol-N-acetylglucosaminyltransferase (GPI-GnT) complex that catalyzes the transfer of N-acetylglucosamine from UDP-N-acetylglucosamine to phosphatidylinositol and participates in the first step of GPI biosynthesis. This Rattus norvegicus (Rat) protein is Phosphatidylinositol N-acetylglucosaminyltransferase subunit C.